The following is a 176-amino-acid chain: UPF0098 protein Rv2140c (176 aa).

N-acetylthreonine is present on T2.

It belongs to the UPF0098 family.

This chain is UPF0098 protein Rv2140c, found in Mycobacterium tuberculosis (strain ATCC 25618 / H37Rv).